A 232-amino-acid chain; its full sequence is MSDNLAKAISNPLFPALDSMLRAGRHISTEDLDNHALLSDFELELSSFYQRYNTELVKAPEGFFYLRPRSTSLIGRSVLSELDMLVGKVLCFLYLSPERLAHEGIFTNQELYDELLALADEKKLMKLVTNRATGSDLDKEKLFEKVRTSLRRLRRLGMIINIGETGKFSISEAVFRFGADVRVGDDIREAQLRLIRDGEAVVHTKEPSQGSLLSEEDQEEQAQEEMTEEGEA.

The disordered stretch occupies residues 203-232; it reads HTKEPSQGSLLSEEDQEEQAQEEMTEEGEA. Residues 214 to 232 are compositionally biased toward acidic residues; it reads SEEDQEEQAQEEMTEEGEA.

Belongs to the MukE family. In terms of assembly, interacts, and probably forms a ternary complex, with MukF and MukB. The complex formation is stimulated by calcium or magnesium.

The protein resides in the cytoplasm. It localises to the nucleoid. Functionally, involved in chromosome condensation, segregation and cell cycle progression. May participate in facilitating chromosome segregation by condensation DNA from both sides of a centrally located replisome during cell division. Probably acts via its interaction with MukB and MukF. The polypeptide is Chromosome partition protein MukE (Vibrio parahaemolyticus serotype O3:K6 (strain RIMD 2210633)).